The primary structure comprises 194 residues: MISIIIQILLISVSVAMDAFAVSIGKGLTVSRVRVQDAVKSTLWFGGFQMLFPILGYFAASTFSKYVTQFDHWIIFALLVFIGGNMVHEAFEEDEENSKETAQFDWKHMLPLAVACSIDAFAVGVSLAFMFTKAHMAFAILSIGVVTGLFSAAGLHIGRAFGSRWQKPAQIAGGVVLILLGIKVLLEHLGVIAF.

6 consecutive transmembrane segments (helical) span residues 2 to 22 (ISII…AFAV), 43 to 63 (LWFG…ASTF), 67 to 87 (VTQF…GNMV), 111 to 131 (PLAV…AFMF), 137 to 157 (AFAI…GLHI), and 174 to 194 (GVVL…VIAF).

This sequence belongs to the MntP (TC 9.B.29) family.

It localises to the cell membrane. Its function is as follows. Probably functions as a manganese efflux pump. In Bifidobacterium longum (strain DJO10A), this protein is Putative manganese efflux pump MntP.